We begin with the raw amino-acid sequence, 247 residues long: 4-hydroxy-tetrahydrodipicolinate reductase (247 aa).

NAD(+) is bound by residues 12 to 17 (GITGRM), 78 to 80 (GTT), and 102 to 105 (AANF). His136 acts as the Proton donor/acceptor in catalysis. A (S)-2,3,4,5-tetrahydrodipicolinate-binding site is contributed by His137. Lys140 (proton donor) is an active-site residue. Position 146-147 (146-147 (GT)) interacts with (S)-2,3,4,5-tetrahydrodipicolinate.

This sequence belongs to the DapB family.

The protein localises to the cytoplasm. It catalyses the reaction (S)-2,3,4,5-tetrahydrodipicolinate + NAD(+) + H2O = (2S,4S)-4-hydroxy-2,3,4,5-tetrahydrodipicolinate + NADH + H(+). It carries out the reaction (S)-2,3,4,5-tetrahydrodipicolinate + NADP(+) + H2O = (2S,4S)-4-hydroxy-2,3,4,5-tetrahydrodipicolinate + NADPH + H(+). It participates in amino-acid biosynthesis; L-lysine biosynthesis via DAP pathway; (S)-tetrahydrodipicolinate from L-aspartate: step 4/4. Functionally, catalyzes the conversion of 4-hydroxy-tetrahydrodipicolinate (HTPA) to tetrahydrodipicolinate. This chain is 4-hydroxy-tetrahydrodipicolinate reductase, found in Acidiphilium cryptum (strain JF-5).